The following is a 573-amino-acid chain: PCNA-interacting partner (573 aa).

Positions Val463–Arg511 are disordered. Positions Ala474–Pro494 are enriched in basic and acidic residues. The segment covering Arg495–Lys504 has biased composition (basic residues).

It belongs to the PARI family. Interacts with RAD51 and PCNA. Interacts with PARP1. Interacts with TASOR. In terms of tissue distribution, present in testis (at protein level). Expressed in testis, gastrointestinal tract (jejunum, ileum, and colon) and immune system (thymus and spleen). Weakly expressed in lung, kidney, pituitary gland and muscle.

It localises to the cytoplasm. Its subcellular location is the nucleus. Its function is as follows. Required to suppress inappropriate homologous recombination, thereby playing a central role DNA repair and in the maintenance of genomic stability. Antagonizes homologous recombination by interfering with the formation of the RAD51-DNA homologous recombination structure. Positively regulate the poly(ADP-ribosyl)ation activity of PARP1; however such function may be indirect. Binds single-strand DNA and poly(A) homopolymers. The protein is PCNA-interacting partner (Parpbp) of Rattus norvegicus (Rat).